Here is a 481-residue protein sequence, read N- to C-terminus: 4-O-methyl-glucuronoyl methylesterase (481 aa).

Positions 1–21 (MVSQTVVSSLLVVLGAAGVRA) are cleaved as a signal peptide. The CBM1 domain occupies 23 to 59 (QRQSLWGQCGGSGWSGPTLCVDGAWCNPQNQWYHQCI). 3 cysteine pairs are disulfide-bonded: C108–C143, C292–C428, and C324–C400. Residues 291 to 296 (GCSRNG) carry the GXSYXG catalytic site motif motif. S293 serves as the catalytic Nucleophile. Substrate contacts are provided by K297, Q339, E347, and W391. The Proton donor/acceptor role is filled by H427.

The protein belongs to the carbohydrate esterase 15 (CE15) family.

It localises to the secreted. The catalysed reaction is a 4-O-methyl-alpha-D-glucuronosyl ester derivative + H2O = 4-O-methyl-alpha-D-glucuronate derivative + an alcohol + H(+). Functionally, glucuronoyl esterase which may play a significant role in biomass degradation, as it is considered to disconnect hemicellulose from lignin through the hydrolysis of the ester bond between 4-O-methyl-D-glucuronic acid residues of glucuronoxylans and aromatic alcohols of lignin. This is 4-O-methyl-glucuronoyl methylesterase from Podospora anserina (strain S / ATCC MYA-4624 / DSM 980 / FGSC 10383) (Pleurage anserina).